We begin with the raw amino-acid sequence, 172 residues long: NADH-quinone oxidoreductase subunit B (172 aa).

Residues Cys-46, Cys-47, Cys-111, and Cys-141 each contribute to the [4Fe-4S] cluster site.

This sequence belongs to the complex I 20 kDa subunit family. NDH-1 is composed of 14 different subunits. Subunits NuoB, C, D, E, F, and G constitute the peripheral sector of the complex. [4Fe-4S] cluster serves as cofactor.

It localises to the cell membrane. It catalyses the reaction a quinone + NADH + 5 H(+)(in) = a quinol + NAD(+) + 4 H(+)(out). In terms of biological role, NDH-1 shuttles electrons from NADH, via FMN and iron-sulfur (Fe-S) centers, to quinones in the respiratory chain. The immediate electron acceptor for the enzyme in this species is believed to be a menaquinone. Couples the redox reaction to proton translocation (for every two electrons transferred, four hydrogen ions are translocated across the cytoplasmic membrane), and thus conserves the redox energy in a proton gradient. In Bacillus mycoides (strain KBAB4) (Bacillus weihenstephanensis), this protein is NADH-quinone oxidoreductase subunit B.